We begin with the raw amino-acid sequence, 414 residues long: Glutamyl-tRNA reductase (414 aa).

Substrate contacts are provided by residues 49 to 52, Ser-108, 113 to 115, and Gln-119; these read TCNR and EPQ. Catalysis depends on Cys-50, which acts as the Nucleophile. NADP(+) is bound at residue 188–193; it reads GAGQTG.

Belongs to the glutamyl-tRNA reductase family. In terms of assembly, homodimer.

It carries out the reaction (S)-4-amino-5-oxopentanoate + tRNA(Glu) + NADP(+) = L-glutamyl-tRNA(Glu) + NADPH + H(+). It participates in porphyrin-containing compound metabolism; protoporphyrin-IX biosynthesis; 5-aminolevulinate from L-glutamyl-tRNA(Glu): step 1/2. In terms of biological role, catalyzes the NADPH-dependent reduction of glutamyl-tRNA(Glu) to glutamate 1-semialdehyde (GSA). In Francisella tularensis subsp. tularensis (strain WY96-3418), this protein is Glutamyl-tRNA reductase.